The chain runs to 740 residues: Leucine-rich repeat neuronal protein 4 (740 aa).

Residues 1–18 form the signal peptide; the sequence is MRQTLPLLLLTVLRPSWA. Topologically, residues 19–679 are extracellular; it reads DPPQEKVPLF…PCAAFTTKPS (661 aa). A glycan (N-linked (GlcNAc...) asparagine) is linked at N42. LRR repeat units follow at residues 51–74, 75–97, 98–123, 125–144, 145–168, 174–197, 203–226, 228–251, 253–276, and 277–300; these read LPAA…GCLP, RTLR…ELGH, LEQL…GPAG, HTLD…TGPA, LSSL…AFAC, LLNL…AFAG, LVTL…WIRD, PKLT…IFKM, PNLQ…IFQD, and TPHL…TLDS. N176 is a glycosylation site (N-linked (GlcNAc...) asparagine). 3 N-linked (GlcNAc...) asparagine glycosylation sites follow: N289, N379, and N442. The disordered stretch occupies residues 389-517; the sequence is VAPSAAPATR…QAPNPSLSEG (129 aa). Composition is skewed to polar residues over residues 430 to 454 and 490 to 514; these read APST…STTR and WDRS…NPSL. The Fibronectin type-III domain maps to 579 to 679; sequence IPDPPRLQGV…PCAAFTTKPS (101 aa). A glycan (N-linked (GlcNAc...) asparagine) is linked at N622. A helical transmembrane segment spans residues 680 to 700; that stretch reads FALLLSGLCAASGLLLASTVV. Over 701–740 the chain is Cytoplasmic; it reads LSACLCRRGQTLGLQRCDTHLVAYKNPAFDDYPLGLQTVS.

It is found in the membrane. Functionally, may play an important role in hippocampus-dependent long-lasting memory. The sequence is that of Leucine-rich repeat neuronal protein 4 (LRRN4) from Homo sapiens (Human).